A 435-amino-acid polypeptide reads, in one-letter code: Methionine aminopeptidase 2 (435 aa).

The disordered stretch occupies residues 57 to 77 (AIDGDQAAAKKKKSKKKKKKA). A compositionally biased stretch (basic residues) spans 65-77 (AKKKKSKKKKKKA). H188 is a substrate binding site. A divalent metal cation contacts are provided by D208, D219, and H288. H296 serves as a coordination point for substrate. The a divalent metal cation site is built by E321 and E416.

Belongs to the peptidase M24A family. Methionine aminopeptidase eukaryotic type 2 subfamily. Co(2+) is required as a cofactor. It depends on Zn(2+) as a cofactor. Requires Mn(2+) as cofactor. Fe(2+) serves as cofactor.

It is found in the cytoplasm. It catalyses the reaction Release of N-terminal amino acids, preferentially methionine, from peptides and arylamides.. Functionally, cotranslationally removes the N-terminal methionine from nascent proteins. The N-terminal methionine is often cleaved when the second residue in the primary sequence is small and uncharged (Met-Ala-, Cys, Gly, Pro, Ser, Thr, or Val). This chain is Methionine aminopeptidase 2, found in Clavispora lusitaniae (strain ATCC 42720) (Yeast).